Consider the following 231-residue polypeptide: Phosphoglycolate phosphatase (231 aa).

Catalysis depends on aspartate 9, which acts as the Nucleophile. The Mg(2+) site is built by aspartate 9 and aspartate 11. Aspartate 11 serves as the catalytic Proton donor. Lysine 154 contributes to the substrate binding site. Mg(2+)-binding residues include aspartate 177 and aspartate 181.

This sequence belongs to the archaeal SPP-like hydrolase family. As to quaternary structure, homodimer. It depends on Mg(2+) as a cofactor.

The catalysed reaction is 2-phosphoglycolate + H2O = glycolate + phosphate. In terms of biological role, catalyzes the dephosphorylation of 2-phosphoglycolate. Has phosphatase activity towards p-nitrophenylphosphate (in vitro). In Pyrococcus horikoshii (strain ATCC 700860 / DSM 12428 / JCM 9974 / NBRC 100139 / OT-3), this protein is Phosphoglycolate phosphatase.